The chain runs to 344 residues: tRNA N6-adenosine threonylcarbamoyltransferase (344 aa).

Fe cation is bound by residues His-110 and His-114. Substrate is bound by residues 132-136, Asp-166, Gly-179, Asp-183, and Asn-278; that span reads LVSGG. Residue Asp-306 coordinates Fe cation.

The protein belongs to the KAE1 / TsaD family. Fe(2+) is required as a cofactor.

The protein localises to the cytoplasm. The enzyme catalyses L-threonylcarbamoyladenylate + adenosine(37) in tRNA = N(6)-L-threonylcarbamoyladenosine(37) in tRNA + AMP + H(+). Its function is as follows. Required for the formation of a threonylcarbamoyl group on adenosine at position 37 (t(6)A37) in tRNAs that read codons beginning with adenine. Is involved in the transfer of the threonylcarbamoyl moiety of threonylcarbamoyl-AMP (TC-AMP) to the N6 group of A37, together with TsaE and TsaB. TsaD likely plays a direct catalytic role in this reaction. This chain is tRNA N6-adenosine threonylcarbamoyltransferase, found in Nocardia farcinica (strain IFM 10152).